We begin with the raw amino-acid sequence, 531 residues long: Outer dynein arm-docking complex subunit 4 (531 aa).

TPR repeat units follow at residues 15-48 (FSTY…QPEE), 50-82 (NCLV…ENDF), and 83-116 (FKGL…RPEF). The segment at 161–185 (KQKAQVKVQKKDSKQQKKVDPERSQ) is disordered. Residues 169–185 (QKKDSKQQKKVDPERSQ) show a composition bias toward basic and acidic residues. TPR repeat units follow at residues 275 to 307 (VKSL…VERW), 320 to 353 (GSLH…AEKY), 360 to 393 (SRAL…ANSS), 397 to 430 (TWLY…ADAA), and 437 to 470 (LNAC…ARLL). Residues 487-531 (KQGMEEQQESEQNNDENDNLRADGNTARDEEEEDVHVQRTEEDEG) are disordered. Residues 492 to 503 (EQQESEQNNDEN) are compositionally biased toward acidic residues. Basic and acidic residues predominate over residues 521-531 (VHVQRTEEDEG).

In terms of assembly, component of the outer dynein arm-docking complex. In the mucociliary epithelium, specifically expressed in ciliated cells.

The protein resides in the cytoplasm. Its subcellular location is the cytoskeleton. The protein localises to the cilium axoneme. Component of the outer dynein arm-docking complex (ODA-DC) that mediates outer dynein arms (ODA) binding onto the doublet microtubule. Plays an essential role for the assembly of ODA-DC and in the docking of ODA in ciliary axoneme. In terms of biological role, required for the docking of the outer dynein arm to cilia, hence plays an essential role in cilia motility. This chain is Outer dynein arm-docking complex subunit 4 (odad4), found in Xenopus laevis (African clawed frog).